The chain runs to 196 residues: Cell division protein SepF (196 aa).

The segment at 16–81 (EDDEEFNEPA…KRAGSTFTKP (66 aa)) is disordered. The span at 56–69 (RPAQSTSKAQTQTA) shows a compositional bias: polar residues.

The protein belongs to the SepF family. In terms of assembly, homodimer. Interacts with FtsZ.

It is found in the cytoplasm. In terms of biological role, cell division protein that is part of the divisome complex and is recruited early to the Z-ring. Probably stimulates Z-ring formation, perhaps through the cross-linking of FtsZ protofilaments. Its function overlaps with FtsA. The sequence is that of Cell division protein SepF from Lactococcus lactis subsp. lactis (strain IL1403) (Streptococcus lactis).